Here is a 223-residue protein sequence, read N- to C-terminus: Golgi SNAP receptor complex member 1 (223 aa).

N-acetylserine is present on serine 2. The Cytoplasmic portion of the chain corresponds to 2–204 (SSQPSFVTIR…MKINTRRKKN (203 aa)). Serine 164 is subject to Phosphoserine. The helical; Anchor for type IV membrane protein transmembrane segment at 205-222 (AFVLATITTLCILFLFFT) threads the bilayer. Position 223 (tryptophan 223) is a topological domain, vesicular.

The protein belongs to the GOSR1 family. In terms of assembly, component of several multiprotein Golgi SNARE complexes. Identified in a Golgi SNARE complex consisting of t-SNARES SED5, YKT6, and the v-SNARE SFT1. Interacts with BET1. Interacts with BOS1. Interacts with SEC22. Interacts with PEP12. Interacts with self.

The protein resides in the golgi apparatus membrane. Functionally, involved in transport from the ER to the Golgi apparatus as well as in intra-Golgi transport. It belongs to a super-family of proteins called t-SNAREs or soluble NSF (N-ethylmaleimide-sensitive factor) attachment protein receptor. Rescues alpha-factor maturation defects. The chain is Golgi SNAP receptor complex member 1 (GOS1) from Saccharomyces cerevisiae (strain ATCC 204508 / S288c) (Baker's yeast).